The following is a 500-amino-acid chain: L-arabinose isomerase (500 aa).

Glu306, Glu333, His350, and His450 together coordinate Mn(2+).

Belongs to the arabinose isomerase family. In terms of assembly, homohexamer. Requires Mn(2+) as cofactor.

The catalysed reaction is beta-L-arabinopyranose = L-ribulose. It participates in carbohydrate degradation; L-arabinose degradation via L-ribulose; D-xylulose 5-phosphate from L-arabinose (bacterial route): step 1/3. Catalyzes the conversion of L-arabinose to L-ribulose. The polypeptide is L-arabinose isomerase (Yersinia pestis bv. Antiqua (strain Nepal516)).